The sequence spans 562 residues: Valerena-4,7(11)-diene synthase (562 aa).

Mg(2+) is bound by residues aspartate 314, aspartate 318, and glutamate 467. A DDXXD motif motif is present at residues 314–318 (DDTYD).

It belongs to the terpene synthase family. Mg(2+) is required as a cofactor. In terms of tissue distribution, predominantly expressed in root.

It catalyses the reaction (2E,6E)-farnesyl diphosphate = valerena-4,7(11)-diene + diphosphate. Functionally, catalyzes formation of valerena-4,7(11)-diene, one of the active ingredients responsible for the sedative effect extracted from Valeriana officinalis root. This Valeriana officinalis (Valerian) protein is Valerena-4,7(11)-diene synthase (TPS2).